The primary structure comprises 1855 residues: Collagen alpha-1(XXVII) chain (1855 aa).

The N-terminal stretch at 1–48 (MGLARATAGLGPCCPPAPALLGAGLRWGGFLFAWILVSFSCHLASTQG) is a signal peptide. A propeptide spans 49–618 (APEDVDVLQR…PEPTPFLMLM (570 aa)) (N-terminal propeptide). In terms of domain architecture, Laminin G-like spans 81 to 246 (PSGFIFTQRA…NYCAHLRERC (166 aa)). Residues Asn281 and Asn349 are each glycosylated (N-linked (GlcNAc...) asparagine). 4 disordered regions span residues 317 to 428 (DVSK…SATV), 511 to 580 (PPLG…SQLS), 617 to 787 (LMGP…GFPG), and 838 to 1617 (GGVG…HPVQ). Composition is skewed to polar residues over residues 382-427 (LSVT…SSAT) and 520-532 (MMPSTRDSTSTPA). Over residues 563–573 (TARDASPRDLT) the composition is skewed to basic and acidic residues. 13 consecutive Collagen-like domains span residues 619–673 (GPPG…GDPG), 682–741 (GAKG…PGPV), 751–810 (GYIG…PGPP), 826–885 (GYPG…PGPM), 886–945 (GKAG…EGPM), 946–1005 (GPPG…VGEK), 1006–1047 (GDRG…PGSR), 1048–1105 (GLPG…GAKG), 1108–1155 (GIPG…PGLP), 1156–1215 (GDSG…KGQE), 1216–1275 (GLKG…PGTP), 1276–1330 (GPKG…GEDG), and 1334–1393 (GAPG…KGSK). Residues 619–1612 (GPPGSKGDCG…RGRPGPPGPP (994 aa)) form a triple-helical region region. Positions 630–663 (PGPPGLPGLPGSPGPRGPRGPPGPFGNPGLPGPP) are enriched in pro residues. Over residues 708–728 (PGAAGHPGEQGQPGPEGSPGA) the composition is skewed to low complexity. Low complexity predominate over residues 905-918 (FPGDIGPPGDNGPE). Residues 1027 to 1036 (GTPGGVGDPG) show a composition bias toward gly residues. Low complexity-rich tracts occupy residues 1083 to 1095 (RGRPGQPGQQGAA), 1121 to 1131 (LPGEPGSQGPQ), and 1161 to 1176 (KGDLGPLGPPGEQGLI). Composition is skewed to basic and acidic residues over residues 1196 to 1221 (LKGDRGDPGPDGEHGEKGQEGLKGEE), 1320 to 1332 (KGEKGEQGEDGKT), and 1344 to 1354 (PVGDRGDRGEP). Low complexity-rich tracts occupy residues 1369–1378 (RGEPGQQGQP) and 1404–1431 (KAGASGRRGTQGLQGLPGPRGVVGRQGP). Collagen-like domains follow at residues 1433-1492 (GMAG…SGLP), 1493-1552 (GQLG…KGIQ), and 1553-1612 (GPRG…PGPP). Over residues 1566–1581 (IIGPPGMLGPSGLPGP) the composition is skewed to low complexity. Residues 1597–1614 (RGPPGPRGRPGPPGPPWH) show a composition bias toward pro residues. A propeptide spans 1616 to 1855 (VQFQQDDLEA…RLEVGPACFL (240 aa)) (C-terminal propeptide). Positions 1655 to 1855 (GEIFKTLHYL…RLEVGPACFL (201 aa)) constitute a Fibrillar collagen NC1 domain. Intrachain disulfides connect Cys1685-Cys1717, Cys1726-Cys1853, and Cys1762-Cys1806. Residues Asp1703, Asn1705, Cys1708, and Asp1711 each coordinate Ca(2+). The N-linked (GlcNAc...) asparagine glycan is linked to Asn1764.

The protein belongs to the fibrillar collagen family.

The protein localises to the secreted. Its subcellular location is the extracellular space. It localises to the extracellular matrix. Plays a role during the calcification of cartilage and the transition of cartilage to bone. This is Collagen alpha-1(XXVII) chain (Col27a1) from Rattus norvegicus (Rat).